Here is a 150-residue protein sequence, read N- to C-terminus: Large ribosomal subunit protein bL9 (150 aa).

This sequence belongs to the bacterial ribosomal protein bL9 family.

Binds to the 23S rRNA. The chain is Large ribosomal subunit protein bL9 from Streptococcus equi subsp. zooepidemicus (strain MGCS10565).